We begin with the raw amino-acid sequence, 323 residues long: Cyclin-H (323 aa).

The tract at residues 296–323 (GYEDDGYISKKPKTEEDEWTDEDFGDSL) is disordered. Acidic residues predominate over residues 310-323 (EEDEWTDEDFGDSL).

The protein belongs to the cyclin family. Cyclin C subfamily. As to quaternary structure, associates primarily with CDK7 and MAT1 to form the CAK complex. CAK can further associate with the core-TFIIH to form the TFIIH basal transcription factor.

The protein resides in the nucleus. Regulates CDK7, the catalytic subunit of the CDK-activating kinase (CAK) enzymatic complex. CAK activates the cyclin-associated kinases CDK1, CDK2, CDK4 and CDK6 by threonine phosphorylation. CAK complexed to the core-TFIIH basal transcription factor activates RNA polymerase II by serine phosphorylation of the repetitive C-terminal domain (CTD) of its large subunit (POLR2A), allowing its escape from the promoter and elongation of the transcripts. Involved in cell cycle control and in RNA transcription by RNA polymerase II. Its expression and activity are constant throughout the cell cycle. In Xenopus laevis (African clawed frog), this protein is Cyclin-H (ccnh).